The sequence spans 377 residues: tRNA-specific 2-thiouridylase MnmA (377 aa).

ATP contacts are provided by residues 8–15 (GMSGGVDS) and M34. An interaction with target base in tRNA region spans residues 94-96 (NPD). C99 functions as the Nucleophile in the catalytic mechanism. C99 and C201 form a disulfide bridge. Residue G123 coordinates ATP. Positions 151–153 (KDQ) are interaction with tRNA. The active-site Cysteine persulfide intermediate is the C201. An interaction with tRNA region spans residues 315–316 (RY).

The protein belongs to the MnmA/TRMU family.

The protein resides in the cytoplasm. It catalyses the reaction S-sulfanyl-L-cysteinyl-[protein] + uridine(34) in tRNA + AH2 + ATP = 2-thiouridine(34) in tRNA + L-cysteinyl-[protein] + A + AMP + diphosphate + H(+). Functionally, catalyzes the 2-thiolation of uridine at the wobble position (U34) of tRNA, leading to the formation of s(2)U34. This Acinetobacter baumannii (strain SDF) protein is tRNA-specific 2-thiouridylase MnmA.